A 265-amino-acid chain; its full sequence is Cytochrome c oxidase subunit 3 (265 aa).

The next 6 helical transmembrane spans lie at 16-36 (PWPF…ILWL), 40-60 (PSFL…FSWW), 83-103 (CVAL…WTFF), 159-179 (VGPF…FLVQ), 198-218 (VFYL…IWLM), and 241-261 (IWYW…VYVW).

The protein belongs to the cytochrome c oxidase subunit 3 family. In terms of assembly, component of the cytochrome c oxidase (complex IV, CIV), a multisubunit enzyme composed of a catalytic core of 3 subunits and several supernumerary subunits. The complex exists as a monomer or a dimer and forms supercomplexes (SCs) in the inner mitochondrial membrane with ubiquinol-cytochrome c oxidoreductase (cytochrome b-c1 complex, complex III, CIII).

The protein resides in the mitochondrion inner membrane. The catalysed reaction is 4 Fe(II)-[cytochrome c] + O2 + 8 H(+)(in) = 4 Fe(III)-[cytochrome c] + 2 H2O + 4 H(+)(out). In terms of biological role, component of the cytochrome c oxidase, the last enzyme in the mitochondrial electron transport chain which drives oxidative phosphorylation. The respiratory chain contains 3 multisubunit complexes succinate dehydrogenase (complex II, CII), ubiquinol-cytochrome c oxidoreductase (cytochrome b-c1 complex, complex III, CIII) and cytochrome c oxidase (complex IV, CIV), that cooperate to transfer electrons derived from NADH and succinate to molecular oxygen, creating an electrochemical gradient over the inner membrane that drives transmembrane transport and the ATP synthase. Cytochrome c oxidase is the component of the respiratory chain that catalyzes the reduction of oxygen to water. Electrons originating from reduced cytochrome c in the intermembrane space (IMS) are transferred via the dinuclear copper A center (CU(A)) of subunit 2 and heme A of subunit 1 to the active site in subunit 1, a binuclear center (BNC) formed by heme A3 and copper B (CU(B)). The BNC reduces molecular oxygen to 2 water molecules using 4 electrons from cytochrome c in the IMS and 4 protons from the mitochondrial matrix. The sequence is that of Cytochrome c oxidase subunit 3 (COIII) from Mytilus edulis (Blue mussel).